Here is a 30-residue protein sequence, read N- to C-terminus: Phospholemman-like protein (30 aa).

The protein belongs to the FXYD family. Phosphorylated by protein kinase a (PK-A) and protein kinase C (PK-C). Phosphorylated in response to insulin and adrenergic stimulation.

Its subcellular location is the microsome membrane. The protein resides in the endoplasmic reticulum membrane. Its function is as follows. Induces a hyperpolarization-activated chloride current when expressed in Xenopus oocytes. May have a functional role in muscle contraction. The sequence is that of Phospholemman-like protein from Squalus acanthias (Spiny dogfish).